The following is a 145-amino-acid chain: Large-conductance mechanosensitive channel (145 aa).

The next 3 helical transmembrane spans lie at 14–34 (VMDLAVGVIIGGAFGGIVKSL), 38–58 (LIMPIVGAIFGGFDFSNYFLP), and 81–101 (GSFLTVLINFLILAWIIFLMV).

This sequence belongs to the MscL family. In terms of assembly, homopentamer.

The protein resides in the cell inner membrane. Channel that opens in response to stretch forces in the membrane lipid bilayer. May participate in the regulation of osmotic pressure changes within the cell. The protein is Large-conductance mechanosensitive channel of Rhizobium leguminosarum bv. trifolii (strain WSM2304).